A 691-amino-acid polypeptide reads, in one-letter code: Elongation factor G (691 aa).

The region spanning 6–281 (SRYRNIGIMA…GVVDFLPSPI (276 aa)) is the tr-type G domain. GTP contacts are provided by residues 15–22 (AHIDAGKT), 79–83 (DTPGH), and 133–136 (NKMD).

It belongs to the TRAFAC class translation factor GTPase superfamily. Classic translation factor GTPase family. EF-G/EF-2 subfamily.

Its subcellular location is the cytoplasm. Catalyzes the GTP-dependent ribosomal translocation step during translation elongation. During this step, the ribosome changes from the pre-translocational (PRE) to the post-translocational (POST) state as the newly formed A-site-bound peptidyl-tRNA and P-site-bound deacylated tRNA move to the P and E sites, respectively. Catalyzes the coordinated movement of the two tRNA molecules, the mRNA and conformational changes in the ribosome. The chain is Elongation factor G from Wolbachia pipientis subsp. Culex pipiens (strain wPip).